A 678-amino-acid polypeptide reads, in one-letter code: Glycine--tRNA ligase beta subunit (678 aa).

It belongs to the class-II aminoacyl-tRNA synthetase family. As to quaternary structure, tetramer of two alpha and two beta subunits.

It localises to the cytoplasm. The enzyme catalyses tRNA(Gly) + glycine + ATP = glycyl-tRNA(Gly) + AMP + diphosphate. This Streptococcus suis (strain 98HAH33) protein is Glycine--tRNA ligase beta subunit.